We begin with the raw amino-acid sequence, 199 residues long: Holliday junction branch migration complex subunit RuvA (199 aa).

The tract at residues 1–65 is domain I; the sequence is MIASLRGKLL…DRGQRLFGFG (65 aa). Residues 66 to 144 form a domain II region; sequence SKKDRESFEL…KFEMFLNEGT (79 aa). The segment at 145–155 is flexible linker; sequence TESSFVDRETD. The interval 155 to 199 is domain III; it reads DLATLALIQLGFDEKSATKQVADAKKLNPGLSASDIVKQVITGTR.

It belongs to the RuvA family. Homotetramer. Forms an RuvA(8)-RuvB(12)-Holliday junction (HJ) complex. HJ DNA is sandwiched between 2 RuvA tetramers; dsDNA enters through RuvA and exits via RuvB. An RuvB hexamer assembles on each DNA strand where it exits the tetramer. Each RuvB hexamer is contacted by two RuvA subunits (via domain III) on 2 adjacent RuvB subunits; this complex drives branch migration. In the full resolvosome a probable DNA-RuvA(4)-RuvB(12)-RuvC(2) complex forms which resolves the HJ.

It localises to the cytoplasm. The RuvA-RuvB-RuvC complex processes Holliday junction (HJ) DNA during genetic recombination and DNA repair, while the RuvA-RuvB complex plays an important role in the rescue of blocked DNA replication forks via replication fork reversal (RFR). RuvA specifically binds to HJ cruciform DNA, conferring on it an open structure. The RuvB hexamer acts as an ATP-dependent pump, pulling dsDNA into and through the RuvAB complex. HJ branch migration allows RuvC to scan DNA until it finds its consensus sequence, where it cleaves and resolves the cruciform DNA. The sequence is that of Holliday junction branch migration complex subunit RuvA from Leptospira biflexa serovar Patoc (strain Patoc 1 / Ames).